Consider the following 97-residue polypeptide: uncharacterized protein (97 aa).

The segment covering 1 to 24 (MTQKNGADRPDDYKRFSSLDKEYD) has biased composition (basic and acidic residues). The interval 1 to 97 (MTQKNGADRP…FEGTIDQNLD (97 aa)) is disordered. Low complexity predominate over residues 31–43 (SNTETESVNTETQ). A compositionally biased stretch (basic and acidic residues) spans 44 to 53 (THNKENKNDT).

This is an uncharacterized protein from Bacillus subtilis (strain 168).